We begin with the raw amino-acid sequence, 303 residues long: UDP-N-acetylenolpyruvoylglucosamine reductase (303 aa).

The 165-residue stretch at 27-191 (VGGPAARLYK…ISAKLQLTPG (165 aa)) folds into the FAD-binding PCMH-type domain. R171 is an active-site residue. S220 acts as the Proton donor in catalysis. E291 is an active-site residue.

The protein belongs to the MurB family. It depends on FAD as a cofactor.

Its subcellular location is the cytoplasm. The enzyme catalyses UDP-N-acetyl-alpha-D-muramate + NADP(+) = UDP-N-acetyl-3-O-(1-carboxyvinyl)-alpha-D-glucosamine + NADPH + H(+). It functions in the pathway cell wall biogenesis; peptidoglycan biosynthesis. Its function is as follows. Cell wall formation. The protein is UDP-N-acetylenolpyruvoylglucosamine reductase of Legionella pneumophila (strain Paris).